A 192-amino-acid polypeptide reads, in one-letter code: Adenylate kinase (192 aa).

12–17 (GSGKTT) contributes to the ATP binding site. An NMP region spans residues 34–63 (STGDLLRAEVASGSELGKTIDSFISKGNLV). AMP contacts are provided by residues Thr-35, Arg-40, 61–63 (NLV), 88–91 (GYPR), and Gln-95. Residues 130 to 136 (GRNRGTD) are LID. ATP is bound at residue Arg-131. The AMP site is built by Arg-133 and Arg-145. Position 173 (Arg-173) interacts with ATP.

It belongs to the adenylate kinase family. In terms of assembly, monomer.

The protein resides in the cytoplasm. It carries out the reaction AMP + ATP = 2 ADP. The protein operates within purine metabolism; AMP biosynthesis via salvage pathway; AMP from ADP: step 1/1. Catalyzes the reversible transfer of the terminal phosphate group between ATP and AMP. Plays an important role in cellular energy homeostasis and in adenine nucleotide metabolism. This Campylobacter jejuni (strain RM1221) protein is Adenylate kinase.